The primary structure comprises 572 residues: MPRKMYSCDFETTTKVEDCRVWAYGYMNIEDHSEYKIGNSLDEFMAWVLKVQADLYFHNLKFDGAFIINWLERNGFKWSADGLPNTYNTIISRMGQWYMIDICLGYKGKRKIHTVIYDSLKKLPFPVKKIAKDFKLTVLKGDIDYHKERPVGYEITPDEYAYIKNDIQIIAEALLIQFKQGLDRMTAGSDDLKGFKDIITTKKFKKVFPTLSLGLDKEVRYAYRGGFTWLNDRFKEKEIGEGMVFDVNSLYPAQMYSRLLPYGEPIVFEGKYVWDEDYPLHIQHIRCEFELKEGYIPTIQIKRSRFYKGNEYLKSSGGEIADLWVSNVDLELMKEHYDLYNVEYISGLKFKATTGLFKDFIDKWTHIKTTSEGAIKQLAKLMLNSLYGKFASNPDVTGKVPYLKENGALGFRLGEEETKDPVYTPMGVFITAWARYTTITAAQACFDRIIYCDTDSIHLTGTEIPDVIKDIVDPKKLGYWAHESTFKRAKYLRQKTYIQDIYMKEVDGKLVEGSPDDYTTIKFSVKCAGMTDKIKKEVTFENFKVGFSRKMKPKPVQVPGGVVLVDDTFTIK.

The 3'-5' exonuclease and strand displacement activities stretch occupies residues 1 to 222; it reads MPRKMYSCDF…LGLDKEVRYA (222 aa). Positions 56-66 are interaction with the primer terminal protein; the sequence is YFHNLKFDGAF. D142 and D166 together coordinate Mg(2+). Residues 223–226 are DNA-binding; Involved in the formation of a stable complex between TP and phi29 DNA polymerase; that stretch reads YRGG. The interval 227–572 is initiation, polymerization and pyrophosphorolytic activities; the sequence is FTWLNDRFKE…VLVDDTFTIK (346 aa). Residues D246 and V247 each coordinate Mg(2+). Y251, K368, and K380 together coordinate 5-methyl-UTP. Mg(2+) is bound by residues D453 and D455. D455 is a binding site for 5-methyl-UTP.

It belongs to the DNA polymerase type-B family. Interacts with the primer terminal protein; this interaction allows the initiation of TP-primed DNA replication at both viral DNA ends. Interacts with DNA. Mg(2+) is required as a cofactor.

The catalysed reaction is DNA(n) + a 2'-deoxyribonucleoside 5'-triphosphate = DNA(n+1) + diphosphate. Its function is as follows. Polymerase responsible for protein-primed viral DNA replication by strand displacement with high processivity and fidelity. To start replication, the DNA polymerase forms a heterodimer with a free primer terminal protein (TP), recognizes the replication origins at both 5' ends of the linear chromosome, and initiates replication using as primer the OH-group of Ser-232 of the TP. This polymerase possesses three enzymatic activities: DNA synthesis (polymerase), primer terminal protein (TP) deoxynucleotidylation, which is the formation of a covalent linkage (phosphoester) between the hydroxyl group of a specific serine residue in TP and 5'-dAMP, a reaction directed by the second T at the 3' end, and 3' to 5' exonuclease activity. Exonuclease activity has a proofreading purpose. The sequence is that of DNA polymerase (2) from Bacillus subtilis (Bacteriophage PZA).